Here is a 152-residue protein sequence, read N- to C-terminus: Transcriptional regulator MraZ (152 aa).

SpoVT-AbrB domains lie at 5-52 (ATLV…PLPE) and 81-124 (ASEC…DETT).

It belongs to the MraZ family. In terms of assembly, forms oligomers.

The protein resides in the cytoplasm. It localises to the nucleoid. Its function is as follows. Negatively regulates its own expression and that of the subsequent genes in the proximal part of the division and cell wall (dcw) gene cluster. Acts by binding directly to DNA. May also regulate the expression of genes outside the dcw cluster. This is Transcriptional regulator MraZ from Escherichia coli O45:K1 (strain S88 / ExPEC).